The following is a 484-amino-acid chain: Poly(A) polymerase alpha-B (484 aa).

The Nuclear localization signal 1 signature appears at 240–257 (RKQLHQLLPSHVLPKKKK). Disordered stretches follow at residues 276–314 (SVDS…PVSL), 326–356 (VPQN…SSTP), and 375–484 (KPVT…RLNR). The Nuclear localization signal 2 motif lies at 392-407 (KRTSSPTNEESPKKTK). Positions 423–441 (EQNKLEPEELKEVHSEEKS) are enriched in basic and acidic residues. Residues 451-464 (SSQRSSSTDLSDIS) show a composition bias toward low complexity.

It belongs to the poly(A) polymerase family. As to quaternary structure, monomer.

The protein resides in the nucleus. The catalysed reaction is RNA(n) + ATP = RNA(n)-3'-adenine ribonucleotide + diphosphate. Its function is as follows. Polymerase that creates the 3'-poly(A) tail of mRNA's. May acquire specificity through interaction with a cleavage and polyadenylation factor (CPSF). The polypeptide is Poly(A) polymerase alpha-B (papola-b) (Xenopus laevis (African clawed frog)).